Consider the following 162-residue polypeptide: Transcription elongation factor GreA (162 aa).

A coiled-coil region spans residues 44-72 (ENAEYHAAKEKQSHIERRIAELSDILSRA).

It belongs to the GreA/GreB family.

In terms of biological role, necessary for efficient RNA polymerase transcription elongation past template-encoded arresting sites. The arresting sites in DNA have the property of trapping a certain fraction of elongating RNA polymerases that pass through, resulting in locked ternary complexes. Cleavage of the nascent transcript by cleavage factors such as GreA or GreB allows the resumption of elongation from the new 3'terminus. GreA releases sequences of 2 to 3 nucleotides. The chain is Transcription elongation factor GreA from Nautilia profundicola (strain ATCC BAA-1463 / DSM 18972 / AmH).